Reading from the N-terminus, the 563-residue chain is Arginine--tRNA ligase (563 aa).

It belongs to the class-I aminoacyl-tRNA synthetase family. In terms of assembly, monomer.

The enzyme catalyses tRNA(Arg) + L-arginine + ATP = L-arginyl-tRNA(Arg) + AMP + diphosphate. The polypeptide is Arginine--tRNA ligase (Encephalitozoon cuniculi (strain GB-M1) (Microsporidian parasite)).